A 153-amino-acid chain; its full sequence is UPF0260 protein YcgN (153 aa).

This sequence belongs to the UPF0260 family.

The chain is UPF0260 protein YcgN from Shigella flexneri serotype 5b (strain 8401).